The following is a 56-amino-acid chain: PEKRNVVVVKDDPDHYKDYAHDKKIDXXXRFIITGNKVKTEKINRQILDNAAKYVE.

It belongs to the orthopoxvirus OPG108 family. Post-translationally, does not contain disulfide bonds.

It is found in the virion membrane. Its function is as follows. Envelope protein that binds to heparan sulfate on the cell surface and might provide virion attachment to target cell. The polypeptide is Envelope protein H3 (OPG108) (Vaccinia virus (strain L-IVP) (VACV)).